A 526-amino-acid chain; its full sequence is Protein ERGIC-53-like (526 aa).

The N-terminal stretch at 1-25 (MPAVSGPGPLFCLLLLLLDPHSPET) is a signal peptide. The Lumenal portion of the chain corresponds to 26–462 (GCPPLRRFEY…QPPRASSCLQ (437 aa)). One can recognise an L-type lectin-like domain in the interval 31–252 (RRFEYKLSFK…DVLSFLTFSL (222 aa)). N-linked (GlcNAc...) asparagine glycosylation occurs at Asn75. Cys176 and Cys215 are oxidised to a cystine. A helical transmembrane segment spans residues 463–483 (PGIFLFYLLIQTVGFFGYVHF). The Cytoplasmic portion of the chain corresponds to 484-526 (RQELNKSLQECLSTGSLPLGPAPHTPRALGILRRQPLPASMPA).

Highly expressed in normal and neoplastic prostate. Also expressed in cardiac atrium, salivary gland, spleen and selective cells in the CNS.

The protein localises to the endoplasmic reticulum-Golgi intermediate compartment membrane. In Homo sapiens (Human), this protein is Protein ERGIC-53-like (LMAN1L).